Reading from the N-terminus, the 274-residue chain is Protein RecA (274 aa).

43–50 (GPESSGKT) is an ATP binding site.

The protein belongs to the RecA family.

It localises to the cytoplasm. Can catalyze the hydrolysis of ATP in the presence of single-stranded DNA, the ATP-dependent uptake of single-stranded DNA by duplex DNA, and the ATP-dependent hybridization of homologous single-stranded DNAs. It interacts with LexA causing its activation and leading to its autocatalytic cleavage. The sequence is that of Protein RecA from Neisseria polysaccharea.